The following is a 188-amino-acid chain: Elongation factor P (188 aa).

The residue at position 34 (Lys-34) is an N6-(3,6-diaminohexanoyl)-5-hydroxylysine.

This sequence belongs to the elongation factor P family. In terms of processing, may be beta-lysylated on the epsilon-amino group of Lys-34 by the combined action of EpmA and EpmB, and then hydroxylated on the C5 position of the same residue by EpmC (if this protein is present). Lysylation is critical for the stimulatory effect of EF-P on peptide-bond formation. The lysylation moiety may extend toward the peptidyltransferase center and stabilize the terminal 3-CCA end of the tRNA. Hydroxylation of the C5 position on Lys-34 may allow additional potential stabilizing hydrogen-bond interactions with the P-tRNA.

It localises to the cytoplasm. It functions in the pathway protein biosynthesis; polypeptide chain elongation. Involved in peptide bond synthesis. Alleviates ribosome stalling that occurs when 3 or more consecutive Pro residues or the sequence PPG is present in a protein, possibly by augmenting the peptidyl transferase activity of the ribosome. Modification of Lys-34 is required for alleviation. In Serratia proteamaculans (strain 568), this protein is Elongation factor P.